We begin with the raw amino-acid sequence, 199 residues long: Probable GTP-binding protein EngB (199 aa).

The region spanning 22 to 195 (QLPEIALSGR…WEWIEQQCDI (174 aa)) is the EngB-type G domain. GTP is bound by residues 30 to 37 (GRSNVGKS), 57 to 61 (GKTQT), 75 to 78 (DVPG), 142 to 145 (TKMD), and 174 to 176 (FSA). Mg(2+) is bound by residues Ser-37 and Thr-59.

Belongs to the TRAFAC class TrmE-Era-EngA-EngB-Septin-like GTPase superfamily. EngB GTPase family. Mg(2+) serves as cofactor.

Functionally, necessary for normal cell division and for the maintenance of normal septation. This Latilactobacillus sakei subsp. sakei (strain 23K) (Lactobacillus sakei subsp. sakei) protein is Probable GTP-binding protein EngB.